A 331-amino-acid chain; its full sequence is Probable 5-dehydro-4-deoxyglucarate dehydratase 2 (331 aa).

The disordered stretch occupies residues 1–23 (MSADTDTDTDTGTGTGPDTDTGT). Residues 10–23 (DTGTGTGPDTDTGT) show a composition bias toward low complexity.

It belongs to the DapA family.

It carries out the reaction 5-dehydro-4-deoxy-D-glucarate + H(+) = 2,5-dioxopentanoate + CO2 + H2O. The protein operates within carbohydrate acid metabolism; D-glucarate degradation; 2,5-dioxopentanoate from D-glucarate: step 2/2. This chain is Probable 5-dehydro-4-deoxyglucarate dehydratase 2, found in Streptomyces avermitilis (strain ATCC 31267 / DSM 46492 / JCM 5070 / NBRC 14893 / NCIMB 12804 / NRRL 8165 / MA-4680).